The chain runs to 331 residues: Tryptophan--tRNA ligase (331 aa).

ATP is bound by residues 10–12 and 18–19; these read QPS and GN. The 'HIGH' region signature appears at 11-19; it reads PSGQLTLGN. D133 lines the L-tryptophan pocket. Residues 145–147, V184, and 193–197 each bind ATP; these read GED and KMSKS. A 'KMSKS' region motif is present at residues 193–197; that stretch reads KMSKS.

Belongs to the class-I aminoacyl-tRNA synthetase family. Homodimer.

It is found in the cytoplasm. It carries out the reaction tRNA(Trp) + L-tryptophan + ATP = L-tryptophyl-tRNA(Trp) + AMP + diphosphate + H(+). In terms of biological role, catalyzes the attachment of tryptophan to tRNA(Trp). This is Tryptophan--tRNA ligase from Listeria innocua serovar 6a (strain ATCC BAA-680 / CLIP 11262).